A 316-amino-acid chain; its full sequence is Cell division protein FtsQ (316 aa).

The tract at residues 1–34 (MAKAARRTKSAPARRSPRRHARQTGATIRRPKRP) is disordered. Residues 1–61 (MAKAARRTKS…HPLLKQMAKR (61 aa)) are Cytoplasmic-facing. A helical membrane pass occupies residues 62 to 80 (LLLILVIVGFLAGLWAARW). Residues 81–316 (PQLLATKTGE…AADPLVSDRI (236 aa)) are Periplasmic-facing. A POTRA domain is found at 97–165 (FSVRHVEIVG…DTLVVDIVER (69 aa)). Residues 295-316 (PEPVKKATKPAKAADPLVSDRI) form a disordered region.

The protein belongs to the FtsQ/DivIB family. FtsQ subfamily.

Its subcellular location is the cell inner membrane. Essential cell division protein. This Zymomonas mobilis subsp. mobilis (strain ATCC 31821 / ZM4 / CP4) protein is Cell division protein FtsQ.